Reading from the N-terminus, the 662-residue chain is UPF0313 protein CPR_1216 (662 aa).

The region spanning A296–K567 is the Radical SAM core domain. 3 residues coordinate [4Fe-4S] cluster: C310, C314, and C317. Residues R597–R662 are disordered. Residues S618–K632 show a composition bias toward basic and acidic residues. The segment covering R633 to K644 has biased composition (basic residues).

It belongs to the UPF0313 family. It depends on [4Fe-4S] cluster as a cofactor.

This chain is UPF0313 protein CPR_1216, found in Clostridium perfringens (strain SM101 / Type A).